A 139-amino-acid polypeptide reads, in one-letter code: Small ribosomal subunit protein eS12 (139 aa).

It belongs to the eukaryotic ribosomal protein eS12 family. As to quaternary structure, subunit of the 40S ribosomal complex. Part of the small subunit (SSU) processome, composed of more than 70 proteins and the RNA chaperone small nucleolar RNA (snoRNA) U3.

The protein resides in the nucleus. Its subcellular location is the nucleolus. Functionally, subunit of the 40S ribosomal complex. Part of the small subunit (SSU) processome, first precursor of the small eukaryotic ribosomal subunit. During the assembly of the SSU processome in the nucleolus, many ribosome biogenesis factors, an RNA chaperone and ribosomal proteins associate with the nascent pre-rRNA and work in concert to generate RNA folding, modifications, rearrangements and cleavage as well as targeted degradation of pre-ribosomal RNA by the RNA exosome. In wing imaginal disks, might have a role in translation rate, growth and cell competition, probably through regulation of Xrp1 expression. Might have a role in development and longevity. The chain is Small ribosomal subunit protein eS12 from Drosophila melanogaster (Fruit fly).